A 145-amino-acid chain; its full sequence is uncharacterized protein (145 aa).

Positions 78–145 (KLQIVAKDRI…DVVEKISILW (68 aa)) constitute an ACT domain.

This is an uncharacterized protein from Methanocaldococcus jannaschii (strain ATCC 43067 / DSM 2661 / JAL-1 / JCM 10045 / NBRC 100440) (Methanococcus jannaschii).